Reading from the N-terminus, the 427-residue chain is NAD kinase 2, mitochondrial (427 aa).

Residues 1-33 (MSLCLRLLCSVCGAAALRVPLGVSSLRALSGSA) constitute a mitochondrion transit peptide.

This sequence belongs to the NAD kinase family. Homodimer.

The protein localises to the mitochondrion. It carries out the reaction NAD(+) + ATP = ADP + NADP(+) + H(+). Its function is as follows. Mitochondrial NAD(+) kinase that phosphorylates NAD(+) to yield NADP(+). Can use both ATP or inorganic polyphosphate as the phosphoryl donor. The sequence is that of NAD kinase 2, mitochondrial (nadk2) from Xenopus tropicalis (Western clawed frog).